The following is a 301-amino-acid chain: Mitochondrial carnitine/acylcarnitine carrier protein (301 aa).

Ala-2 carries the N-acetylalanine modification. The Cytoplasmic portion of the chain corresponds to 2–12 (ADQPKPISPLK). Solcar repeat units follow at residues 8–99 (ISPL…GKKL), 108–196 (LSYP…LKNI), and 207–293 (LSAP…AMKF). Residues 13–31 (NLLAGGFGGVCLVFVGHPL) traverse the membrane as a helical segment. The Mitochondrial matrix portion of the chain corresponds to 32–73 (DTVKVRLQTQPPSLPGQPPMYSGTFDCFRKTLFREGITGLYR). A helical membrane pass occupies residues 74-93 (GMAAPIIGVTPMFAVCFFGF). Residues 94 to 112 (GLGKKLQQKHPEDVLSYPQ) lie on the Cytoplasmic side of the membrane. The chain crosses the membrane as a helical span at residues 113-131 (LFAAGMLSGVFTTGIMTPG). Topologically, residues 132–170 (ERIKCLLQIQASSGESKYTGTLDCAKKLYQEFGIRGIYK) are mitochondrial matrix. An N6-acetyllysine mark is found at Lys-148 and Lys-157. Residue Lys-170 is modified to N6-acetyllysine; alternate. Lys-170 carries the N6-succinyllysine; alternate modification. The helical transmembrane segment at 171-190 (GTVLTLMRDVPASGMYFMTY) threads the bilayer. Over 191–211 (EWLKNIFTPEGKRVSELSAPR) the chain is Cytoplasmic. Residues 212 to 230 (ILVAGGIAGIFNWAVAIPP) form a helical membrane-spanning segment. The Mitochondrial matrix segment spans residues 231 to 267 (DVLKSRFQTAPPGKYPNGFRDVLRELIRDEGVTSLYK). Residues 268 to 287 (GFNAVMIRAFPANAACFLGF) traverse the membrane as a helical segment. Residues 288-301 (EVAMKFLNWATPNL) are Cytoplasmic-facing.

This sequence belongs to the mitochondrial carrier (TC 2.A.29) family.

The protein localises to the mitochondrion inner membrane. The catalysed reaction is O-acetyl-(R)-carnitine(in) + (R)-carnitine(out) = O-acetyl-(R)-carnitine(out) + (R)-carnitine(in). It carries out the reaction an O-acyl-(R)-carnitine(in) + (R)-carnitine(out) = an O-acyl-(R)-carnitine(out) + (R)-carnitine(in). It catalyses the reaction O-propanoyl-(R)-carnitine(in) + (R)-carnitine(out) = O-propanoyl-(R)-carnitine(out) + (R)-carnitine(in). The enzyme catalyses O-hexadecanoyl-(R)-carnitine(in) + (R)-carnitine(out) = O-hexadecanoyl-(R)-carnitine(out) + (R)-carnitine(in). The catalysed reaction is O-octanoyl-(R)-carnitine(in) + (R)-carnitine(out) = O-octanoyl-(R)-carnitine(out) + (R)-carnitine(in). It carries out the reaction (R)-carnitine(in) = (R)-carnitine(out). Mediates the electroneutral exchange of acylcarnitines (O-acyl-(R)-carnitine or L-acylcarnitine) of different acyl chain lengths (ranging from O-acetyl-(R)-carnitine to long-chain O-acyl-(R)-carnitines) with free carnitine ((R)-carnitine or L-carnitine) across the mitochondrial inner membrane, via a ping-pong mechanism. Key player in the mitochondrial oxidation pathway, it translocates the fatty acids in the form of acylcarnitines into the mitochondrial matrix, where the carnitine palmitoyltransferase 2 (CPT-2) activates them to undergo fatty acid beta-oxidation. Catalyzes the unidirectional transport (uniport) of carnitine at lower rates than the antiport (exchange). The protein is Mitochondrial carnitine/acylcarnitine carrier protein of Homo sapiens (Human).